The primary structure comprises 1077 residues: ATP-dependent DNA helicase MPH1 (1077 aa).

Residues 99-266 (IVHRALFENV…EVVDNLQISK (168 aa)) enclose the Helicase ATP-binding domain. 112-119 (IPTGMGKT) is a binding site for ATP. The DEAH box motif lies at 214 to 217 (DEAH). Positions 511 to 660 (KKVDRIRRLE…SLNYKVTDRI (150 aa)) constitute a Helicase C-terminal domain. 2 disordered regions span residues 536 to 556 (EKLARTARRTGSSEEAQISGM) and 831 to 859 (TLSSDNKSTPDQLKRSQSDNGFGIPPKRQ). The span at 831 to 841 (TLSSDNKSTPD) shows a compositional bias: polar residues.

It belongs to the DEAD box helicase family. DEAH subfamily. FANCM sub-subfamily. As to quaternary structure, interacts with the MHF histone-fold complex to form the FANCM-MHF complex.

It is found in the nucleus. It catalyses the reaction ATP + H2O = ADP + phosphate + H(+). Functionally, ATP-dependent DNA helicase involved in DNA damage repair by homologous recombination and in genome maintenance. Capable of unwinding D-loops. Plays a role in limiting crossover recombinants during mitotic DNA double-strand break (DSB) repair. Component of a FANCM-MHF complex which promotes gene conversion at blocked replication forks, probably by reversal of the stalled fork. This Eremothecium gossypii (strain ATCC 10895 / CBS 109.51 / FGSC 9923 / NRRL Y-1056) (Yeast) protein is ATP-dependent DNA helicase MPH1.